Reading from the N-terminus, the 81-residue chain is Beta-defensin 34 (81 aa).

The signal sequence occupies residues 1 to 20 (MKTFLFLFAVLFFWSQPRMH). Cystine bridges form between Cys-28-Cys-55, Cys-35-Cys-49, and Cys-39-Cys-56. Over residues 62–72 (CGRSKGNQSDE) the composition is skewed to polar residues. The tract at residues 62–81 (CGRSKGNQSDEGSGHMGTRG) is disordered.

The protein belongs to the beta-defensin family. Only expressed in epididymis (caput, corpus and cauda).

It localises to the secreted. In terms of biological role, has antibacterial activity. This chain is Beta-defensin 34 (Defb34), found in Mus musculus (Mouse).